The primary structure comprises 236 residues: UPF0502 protein BamMC406_5439 (236 aa).

The protein belongs to the UPF0502 family.

In Burkholderia ambifaria (strain MC40-6), this protein is UPF0502 protein BamMC406_5439.